A 399-amino-acid polypeptide reads, in one-letter code: MKERFSPLFEPLTLPNGSQLDNRFVLSPMVTNSSTKDGYVTQDDVSYALRRAASAPLQITGAAYVDPYGQLFEYGFSVTKDADISGLKELAQAMKAKGAKAVLQLTHAGRFASHALTKYGFVYGPSYMQLRSPQPHEVKPLTGQQIEELIAAYAQATRRAIQAGFDGVEVSSAQRLLIQTFFSTFSNKRTDSYGCQTLFNRSKLTLAVLQAVQQVINQEAPDGFIFGFRATPEETRGNDIGYSIDEFLQLMDWVLNIAKLDYLAIASWGRHVFRNTVRSPGPYYGRRVNQVVRDYLRNKLPVMATGGMNTPDKAIEALAHADFIGVSTPFVVDPEFAHKIKEGCEESIHLRIRPADLKSLAIPQASFKDIVPLMDYGESLPKESRTLFRSLTHNYKEIK.

This sequence belongs to the NADH:flavin oxidoreductase/NADH oxidase family. As to quaternary structure, directly interacts with lipoylated GcvH-L (SpyM50867).

This is an uncharacterized protein from Streptococcus pyogenes serotype M5 (strain Manfredo).